The primary structure comprises 23 residues: uncharacterized protein (23 aa).

A helical transmembrane segment spans residues 3–23 (YFFMGISFMVIVWAGTFALMI).

The protein resides in the cell inner membrane. This is an uncharacterized protein from Escherichia coli (strain K12).